A 182-amino-acid chain; its full sequence is Vacuolar protein sorting-associated protein 29 (182 aa).

Zn(2+) contacts are provided by D8, H10, and N39. K50 is modified (N6-acetyllysine). Zn(2+)-binding residues include D62, H86, H115, and H117.

It belongs to the VPS29 family. As to quaternary structure, component of the commander complex consisting of the CCC subcomplex and the retriever subcomplex. Component of the heterotrimeric retriever complex formed by VPS26C, VPS29 and VPS35L; within the complex interacts with VPS35L. Component of the heterotrimeric retromer cargo-selective complex (CSC), also described as vacuolar protein sorting subcomplex (VPS), formed by VPS26 (VPS26A or VPS26B), VPS29 and VPS35. The CSC has a highly elongated structure with VPS26 and VPS29 binding independently at opposite distal ends of VPS35 as central platform. The CSC is believed to associate with variable sorting nexins to form functionally distinct retromer complex variants. The originally described retromer complex (also called SNX-BAR retromer) is a pentamer containing the CSC and a heterodimeric membrane-deforming subcomplex formed between SNX1 or SNX2 and SNX5 or SNX6 (also called SNX-BAR subcomplex); the respective CSC and SNX-BAR subcomplexes associate with low affinity. The CSC associates with SNX3 to form a SNX3-retromer complex. The CSC associates with SNX27, the WASH complex and the SNX-BAR subcomplex to form the SNX27-retromer complex. Interacts with VPS26A, VPS35, SNX1, SNX2, SNX3, SNX27, WASHC5. Interacts with TBC1D5; this interaction is blocked by VPS35L in the retriever complex. Interacts with SNX17; the interaction is indirect; SNX17 (via its C-terminus) interacts with the retriever complex (via VPS26C and VPS35L). Interacts with VPS26B and ANKRD27. In terms of assembly, (Microbial infection) Interacts with human papillomavirus 16 minor capsid protein L2 (via C-terminus); this interaction mediates the transport of the capsid from the early endosome to the Golgi apparatus. As to expression, ubiquitous. Highly expressed in heart, lung, placenta, spleen, peripheral blood leukocytes, thymus, colon skeletal muscle, kidney and brain.

The protein localises to the cytoplasm. It localises to the membrane. Its subcellular location is the endosome membrane. It is found in the early endosome. The protein resides in the late endosome. Its function is as follows. Component of the commander complex that is essential for endosomal recycling of transmembrane cargos; the commander complex is composed of the CCC subcomplex and the retriever subcomplex. Component of the retriever complex, which is a heterotrimeric complex related to retromer cargo-selective complex (CSC) and essential for retromer-independent retrieval and recycling of numerous cargos such as integrin alpha-5/beta-1 (ITGA5:ITGB1). Component of the retromer cargo-selective complex (CSC). The CSC is believed to be the core functional component of retromer or respective retromer complex variants acting to prevent missorting of selected transmembrane cargo proteins into the lysosomal degradation pathway. The recruitment of the CSC to the endosomal membrane involves RAB7A and SNX3. The SNX-BAR retromer mediates retrograde transport of cargo proteins from endosomes to the trans-Golgi network (TGN) and is involved in endosome-to-plasma membrane transport for cargo protein recycling. The SNX3-retromer mediates the retrograde endosome-to-TGN transport of WLS distinct from the SNX-BAR retromer pathway. The SNX27-retromer is believed to be involved in endosome-to-plasma membrane trafficking and recycling of a broad spectrum of cargo proteins. The CSC seems to act as recruitment hub for other proteins, such as the WASH complex and TBC1D5. Required to regulate transcytosis of the polymeric immunoglobulin receptor (pIgR-pIgA). In the endosomes, retriever complex drives the retrieval and recycling of NxxY-motif-containing cargo proteins by coupling to SNX17, a cargo essential for the homeostatic maintenance of numerous cell surface proteins associated with processes that include cell migration, cell adhesion, nutrient supply and cell signaling. The recruitment of the retriever complex to the endosomal membrane involves CCC and WASH complexes. Involved in GLUT1 endosome-to-plasma membrane trafficking; the function is dependent of association with ANKRD27. Functionally, (Microbial infection) The heterotrimeric retromer cargo-selective complex (CSC) mediates the exit of human papillomavirus from the early endosome and the delivery to the Golgi apparatus. The protein is Vacuolar protein sorting-associated protein 29 of Homo sapiens (Human).